Here is a 209-residue protein sequence, read N- to C-terminus: Uracil phosphoribosyltransferase (209 aa).

5-phospho-alpha-D-ribose 1-diphosphate is bound by residues Arg79, Arg104, and 131 to 139 (DPMLATGGS). Residues Ile194 and 199 to 201 (GDA) contribute to the uracil site. Position 200 (Asp200) interacts with 5-phospho-alpha-D-ribose 1-diphosphate.

It belongs to the UPRTase family. The cofactor is Mg(2+).

It carries out the reaction UMP + diphosphate = 5-phospho-alpha-D-ribose 1-diphosphate + uracil. Its pathway is pyrimidine metabolism; UMP biosynthesis via salvage pathway; UMP from uracil: step 1/1. With respect to regulation, allosterically activated by GTP. Its function is as follows. Catalyzes the conversion of uracil and 5-phospho-alpha-D-ribose 1-diphosphate (PRPP) to UMP and diphosphate. This Natranaerobius thermophilus (strain ATCC BAA-1301 / DSM 18059 / JW/NM-WN-LF) protein is Uracil phosphoribosyltransferase.